Here is a 567-residue protein sequence, read N- to C-terminus: Ribulokinase (567 aa).

The protein belongs to the ribulokinase family.

It catalyses the reaction D-ribulose + ATP = D-ribulose 5-phosphate + ADP + H(+). The enzyme catalyses L-ribulose + ATP = L-ribulose 5-phosphate + ADP + H(+). The protein operates within carbohydrate degradation; L-arabinose degradation via L-ribulose; D-xylulose 5-phosphate from L-arabinose (bacterial route): step 2/3. This is Ribulokinase from Vibrio parahaemolyticus serotype O3:K6 (strain RIMD 2210633).